The following is a 339-amino-acid chain: Phosphate acyltransferase (339 aa).

This sequence belongs to the PlsX family. In terms of assembly, homodimer. Probably interacts with PlsY.

The protein localises to the cytoplasm. It catalyses the reaction a fatty acyl-[ACP] + phosphate = an acyl phosphate + holo-[ACP]. It functions in the pathway lipid metabolism; phospholipid metabolism. Catalyzes the reversible formation of acyl-phosphate (acyl-PO(4)) from acyl-[acyl-carrier-protein] (acyl-ACP). This enzyme utilizes acyl-ACP as fatty acyl donor, but not acyl-CoA. In Clostridium perfringens (strain SM101 / Type A), this protein is Phosphate acyltransferase.